Consider the following 240-residue polypeptide: Uridylate kinase (240 aa).

12–15 (KLSG) is a binding site for ATP. The involved in allosteric activation by GTP stretch occupies residues 20–25 (GDKGFG). Gly54 lines the UMP pocket. 2 residues coordinate ATP: Gly55 and Arg59. UMP is bound by residues Asp74 and 135–142 (TGSPYFST). Asn163, Tyr169, and Asp172 together coordinate ATP.

The protein belongs to the UMP kinase family. As to quaternary structure, homohexamer.

The protein localises to the cytoplasm. It catalyses the reaction UMP + ATP = UDP + ADP. It functions in the pathway pyrimidine metabolism; CTP biosynthesis via de novo pathway; UDP from UMP (UMPK route): step 1/1. With respect to regulation, allosterically activated by GTP. Inhibited by UTP. Functionally, catalyzes the reversible phosphorylation of UMP to UDP. The sequence is that of Uridylate kinase from Levilactobacillus brevis (strain ATCC 367 / BCRC 12310 / CIP 105137 / JCM 1170 / LMG 11437 / NCIMB 947 / NCTC 947) (Lactobacillus brevis).